A 598-amino-acid chain; its full sequence is MFS transporter L2 (598 aa).

Helical transmembrane passes span 83-103 (IAAF…ATSI), 122-142 (FWAG…LGSF), and 150-170 (SLIY…AVAN). An N-linked (GlcNAc...) asparagine glycan is attached at Asn-171. The next 5 membrane-spanning stretches (helical) occupy residues 183 to 203 (GVGG…TVPL), 212 to 232 (FFGM…GAFA), 239 to 259 (WVFW…TVFL), 277 to 297 (WIGM…ITWG), and 309 to 329 (LVPL…QEKF). The N-linked (GlcNAc...) asparagine glycan is linked to Asn-342. The next 6 membrane-spanning stretches (helical) occupy residues 346–366 (ALLY…LYFM), 383–403 (VALF…GIAI), 411–431 (WANW…ILLK), 439–459 (WIFL…AMAL), 476–496 (MFSF…GVVF), and 550–570 (YIWI…LFID).

It belongs to the major facilitator superfamily.

The protein localises to the membrane. MFS transporter; part of the gene cluster that mediates the biosynthesis of squalestatin S1 (SQS1, also known as zaragozic acid A), a lead compound for the treatment of hyper-cholesterolemia by targeting squalene synthase (SS). This chain is MFS transporter L2, found in Phoma sp. (strain ATCC 20986 / MF5453).